A 95-amino-acid polypeptide reads, in one-letter code: DNA-directed RNA polymerase subunit Rpo6 (95 aa).

It belongs to the archaeal Rpo6/eukaryotic RPB6 RNA polymerase subunit family. As to quaternary structure, part of the RNA polymerase complex.

It localises to the cytoplasm. It carries out the reaction RNA(n) + a ribonucleoside 5'-triphosphate = RNA(n+1) + diphosphate. DNA-dependent RNA polymerase (RNAP) catalyzes the transcription of DNA into RNA using the four ribonucleoside triphosphates as substrates. This Saccharolobus islandicus (strain M.16.27) (Sulfolobus islandicus) protein is DNA-directed RNA polymerase subunit Rpo6.